The following is a 389-amino-acid chain: NADH-quinone oxidoreductase subunit D (389 aa).

This sequence belongs to the complex I 49 kDa subunit family. In terms of assembly, NDH-1 is composed of 14 different subunits. Subunits NuoB, C, D, E, F, and G constitute the peripheral sector of the complex.

The protein localises to the cell inner membrane. The catalysed reaction is a quinone + NADH + 5 H(+)(in) = a quinol + NAD(+) + 4 H(+)(out). Its function is as follows. NDH-1 shuttles electrons from NADH, via FMN and iron-sulfur (Fe-S) centers, to quinones in the respiratory chain. The immediate electron acceptor for the enzyme in this species is believed to be ubiquinone. Couples the redox reaction to proton translocation (for every two electrons transferred, four hydrogen ions are translocated across the cytoplasmic membrane), and thus conserves the redox energy in a proton gradient. The sequence is that of NADH-quinone oxidoreductase subunit D from Citrifermentans bemidjiense (strain ATCC BAA-1014 / DSM 16622 / JCM 12645 / Bem) (Geobacter bemidjiensis).